A 761-amino-acid chain; its full sequence is Mitochondrial intermediate peptidase (761 aa).

Residues M1–N37 constitute a mitochondrion transit peptide. H547 is a Zn(2+) binding site. E548 is an active-site residue. 2 residues coordinate Zn(2+): H551 and H554.

This sequence belongs to the peptidase M3 family. Requires Zn(2+) as cofactor.

It is found in the mitochondrion matrix. The enzyme catalyses Release of an N-terminal octapeptide as second stage of processing of some proteins imported into the mitochondrion.. Cleaves proteins, imported into the mitochondrion, to their mature size. While most mitochondrial precursor proteins are processed to the mature form in one step by mitochondrial processing peptidase (MPP), the sequential cleavage by MIP of an octapeptide after initial processing by MPP is a required step for a subgroup of nuclear-encoded precursor proteins destined for the matrix or the inner membrane. This Candida glabrata (strain ATCC 2001 / BCRC 20586 / JCM 3761 / NBRC 0622 / NRRL Y-65 / CBS 138) (Yeast) protein is Mitochondrial intermediate peptidase (OCT1).